We begin with the raw amino-acid sequence, 197 residues long: MFLRSVTRAAARSSAVPTTGLRSYRTVSGPMACLNARPQTEKKSIAPQQTRAASEHAISNPTLAGIEKRWEAMPPQEQAELWMQLRDRMKVDWHQMTLQEKKAAYWISFGPHGPRSVPPKGENLKIFFKVAQLTLVSFGIFYVIHLFAKPQPKTMTKEWQEASNEYAKQEKINPIYGISAEGYEGKGFVQSPPAEKQ.

The N-terminal 13 residues, 1–13 (MFLRSVTRAAARS), are a transit peptide targeting the mitochondrion. At 14-129 (SAVPTTGLRS…KGENLKIFFK (116 aa)) the chain is on the mitochondrial matrix side. The chain crosses the membrane as a helical span at residues 130 to 147 (VAQLTLVSFGIFYVIHLF). The Mitochondrial intermembrane segment spans residues 148 to 197 (AKPQPKTMTKEWQEASNEYAKQEKINPIYGISAEGYEGKGFVQSPPAEKQ).

This sequence belongs to the cytochrome c oxidase IV family. Component of the cytochrome c oxidase (complex IV, CIV), a multisubunit enzyme composed of a catalytic core of 3 subunits and seevral supernumerary subunits. The complex exists as a monomer or a dimer and forms supercomplexes (SCs) in the inner mitochondrial membrane with ubiquinol-cytochrome c oxidoreductase (cytochrome b-c1 complex, complex III, CIII).

Its subcellular location is the mitochondrion inner membrane. It participates in energy metabolism; oxidative phosphorylation. In terms of biological role, component of the cytochrome c oxidase, the last enzyme in the mitochondrial electron transport chain which drives oxidative phosphorylation. The respiratory chain contains 3 multisubunit complexes succinate dehydrogenase (complex II, CII), ubiquinol-cytochrome c oxidoreductase (cytochrome b-c1 complex, complex III, CIII) and cytochrome c oxidase (complex IV, CIV), that cooperate to transfer electrons derived from NADH and succinate to molecular oxygen, creating an electrochemical gradient over the inner membrane that drives transmembrane transport and the ATP synthase. Cytochrome c oxidase is the component of the respiratory chain that catalyzes the reduction of oxygen to water. Electrons originating from reduced cytochrome c in the intermembrane space (IMS) are transferred via the dinuclear copper A center (CU(A)) of subunit 2 and heme A of subunit 1 to the active site in subunit 1, a binuclear center (BNC) formed by heme A3 and copper B (CU(B)). The BNC reduces molecular oxygen to 2 water molecules using 4 electrons from cytochrome c in the IMS and 4 protons from the mitochondrial matrix. This Aspergillus niger protein is Cytochrome c oxidase polypeptide 5, mitochondrial (cox5).